The chain runs to 64 residues: Large ribosomal subunit protein bL35 (64 aa).

Residues 1 to 45 (MPKMKTHKGAAKRFKKTGKGKIKRRKAFKSHILTKKTPKRKRNLR) are compositionally biased toward basic residues. The tract at residues 1–64 (MPKMKTHKGA…EEKRIKRLLP (64 aa)) is disordered.

The protein belongs to the bacterial ribosomal protein bL35 family.

The protein is Large ribosomal subunit protein bL35 of Natranaerobius thermophilus (strain ATCC BAA-1301 / DSM 18059 / JW/NM-WN-LF).